Reading from the N-terminus, the 232-residue chain is Dehydrin DHN3 (232 aa).

The segment covering 1-14 (MSQYQNQYGAQTGM) has biased composition (polar residues). Disordered stretches follow at residues 1-66 (MSQY…QHRG) and 140-232 (EHHG…CTGH). Positions 49–60 (TTGGATGQGHGH) are enriched in gly residues. Residues 140–157 (EHHGDKKGVMDKIKEKIP) show a composition bias toward basic and acidic residues. Positions 159–168 (TEQSRTNTDG) are enriched in polar residues. The span at 198-223 (EQQDVHHGDEQHGEKKGIMEKIKEKL) shows a compositional bias: basic and acidic residues.

This sequence belongs to the plant dehydrin family.

This Pisum sativum (Garden pea) protein is Dehydrin DHN3 (DHN3).